A 227-amino-acid polypeptide reads, in one-letter code: MDGFSNMEQAPLAYQEVQWLAETFVTFMGLGWLINYVLMIWHSRRGEPSSMALIPLCNNIAWELVYTIIYPSPNKVELAAFIAGVTLNFLIMTSAARSARSEWSHSPTMAKHAGLIIVAGILMCFTGHVALAMEIGPALAYSWGAVICQLALSIGGVCQLLQQHSTGGTSWKLWSSRFLGSCCAVGFAFLRWRYWPEAYGWLASPLILWSLATFLVADLTYGVCLLL.

A run of 7 helical transmembrane segments spans residues 20 to 40, 51 to 71, 76 to 96, 113 to 133, 135 to 155, 173 to 195, and 206 to 226; these read LAET…VLMI, MALI…IIYP, VELA…TSAA, AGLI…ALAM, IGPA…LSIG, LWSS…WRYW, and LILW…VCLL.

It belongs to the paxB family.

Its subcellular location is the membrane. Its pathway is secondary metabolite biosynthesis. Terpene cyclase; part of the gene cluster that mediates the biosynthesis of lolitrems, indole-diterpene mycotoxins that are potent tremorgens in mammals, and are synthesized by clavicipitaceous fungal endophytes in association with their grass hosts. The geranylgeranyl diphosphate (GGPP) synthase ltmG is proposed to catalyze the first step in lolitrem biosynthesis. LtmG catalyzes a series of iterative condensations of isopentenyl diphosphate (IPP) with dimethylallyl diphosphate (DMAPP), geranyl diphosphate (GPP), and farnesyl diphosphate (FPP), to form GGPP. GGPP then condenses with indole-3-glycerol phosphate to form 3-geranylgeranylindole, an acyclic intermediate, to be incorporated into paxilline. Either ltmG or ltmC could be responsible for this step, as both are putative prenyl transferases. The FAD-dependent monooxygenase ltmM then catalyzes the epoxidation of the two terminal alkenes of the geranylgeranyl moiety, which is subsequently cyclized by ltmB, to paspaline. The cytochrome P450 monooxygenases ltmQ and ltmP can sequentially oxidize paspaline to terpendole E and terpendole F. Alternatively, ltmP converts paspaline to an intermediate which is oxidized by ltmQ to terpendole F. LtmF, ltmK, ltmE and ltmJ appear to be unique to the epichloe endophytes. The prenyltransferase ltmF is involved in the 27-hydroxyl-O-prenylation. The cytochrome P450 monooxygenase ltmK is required for the oxidative acetal ring formation. The multi-functional prenyltransferase ltmE is required for C20- and C21-prenylations of the indole ring of paspalanes and acts together with the cytochrome P450 monooxygenase ltmJ to yield lolitremanes by multiple oxidations and ring closures. The stereoisomer pairs of lolitriol and lolitrem N or lolitrem B and lolitrem F may be attributed to variations in the way in which ring closure can occur under the action of ltmJ. While the major product of this pathway is lolitrem B, the prenyl transferases and cytochrome P450 monooxygenases identified in this pathway have a remarkable versatility in their regio- and stereo-specificities to generate a diverse range of metabolites that are products of a metabolic grid rather than a linear pathway. The sequence is that of Terpene cyclase ltmB from Epichloe festucae var. lolii (Neotyphodium lolii).